The chain runs to 166 residues: MNKWRLYYQVLNFGMIVSSALMIWKGLMVITGSESPIVLLSGSMEPAFHRGYLLFLTNRVEDPIRVGEIAVLRIEGRKIPIVHRVLKIHEKQNGHIKFLTKGDNNAVDDRGLYKQDQHWLEKKDVVGRARGFVPYIGIGTSLMNDYPKHKYEVLFLLGLFVLVHRE.

At 1–6 (MNKWRL) the chain is on the cytoplasmic side. Residues 7–24 (YYQVLNFGMIVSSALMIW) traverse the membrane as a helical; Signal-anchor for type II membrane protein segment. Residues 25–166 (KGLMVITGSE…LGLFVLVHRE (142 aa)) lie on the Extracellular side of the membrane. Ser-43 is an active-site residue.

This sequence belongs to the peptidase S26B family.

The protein resides in the membrane. It carries out the reaction Cleavage of hydrophobic, N-terminal signal or leader sequences from secreted and periplasmic proteins.. In terms of biological role, putative component of some signal peptidase complex which removes signal peptides from nascent proteins as they are translocated into the lumen of the endoplasmic reticulum. The chain is Putative signal peptidase complex catalytic subunit SEC11B (SEC11B) from Homo sapiens (Human).